The primary structure comprises 157 residues: Arginine repressor (157 aa).

It belongs to the ArgR family.

The protein resides in the cytoplasm. The protein operates within amino-acid biosynthesis; L-arginine biosynthesis [regulation]. Functionally, regulates arginine biosynthesis genes. This is Arginine repressor from Bacteroides thetaiotaomicron (strain ATCC 29148 / DSM 2079 / JCM 5827 / CCUG 10774 / NCTC 10582 / VPI-5482 / E50).